The sequence spans 253 residues: Kallikrein-7 (253 aa).

Positions 1 to 22 (MARSLLLPLQILLLSLALETAG) are cleaved as a signal peptide. Residues 23–29 (EEAQGDK) constitute a propeptide, activation peptide. The Peptidase S1 domain occupies 30–250 (IIDGAPCARG…FTKWINDTMK (221 aa)). 6 disulfides stabilise this stretch: C36–C165, C55–C71, C137–C239, C144–C211, C176–C190, and C201–C226. Catalysis depends on charge relay system residues H70 and D112. Residue S205 is the Charge relay system of the active site. N246 carries an N-linked (GlcNAc...) asparagine glycan.

The protein belongs to the peptidase S1 family. Kallikrein subfamily. As to expression, abundantly expressed in the skin and is expressed by keratinocytes in the epidermis. Also expressed in the brain, mammary gland, cerebellum, spinal cord and kidney. Lower levels in salivary glands, uterus, thymus, thyroid, placenta, trachea and testis. Up-regulated in ovarian carcinoma, especially late-stage serous carcinoma, compared with normal ovaries and benign adenomas (at protein level).

It is found in the secreted. The enzyme catalyses Cleavage of proteins with aromatic side chains in the P1 position.. Inhibited by Zn2+ and Cu2+ at low micromolar concentrations. Inhibited by SERPINA12. May catalyze the degradation of intercellular cohesive structures in the cornified layer of the skin in the continuous shedding of cells from the skin surface. Specific for amino acid residues with aromatic side chains in the P1 position. Cleaves insulin A chain at '14-Tyr-|-Gln-15' and insulin B chain at '6-Leu-|-Cys-7', '16-Tyr-|-Leu-17', '25-Phe-|-Tyr-26' and '26-Tyr-|-Thr-27'. Could play a role in the activation of precursors to inflammatory cytokines. This is Kallikrein-7 (KLK7) from Homo sapiens (Human).